A 45-amino-acid chain; its full sequence is Proteinase inhibitor IIA (45 aa).

Intrachain disulfides connect Cys10-Cys24, Cys14-Cys35, and Cys20-Cys43.

The protein belongs to the protease inhibitor I20 (potato type II proteinase inhibitor) family.

The protein localises to the secreted. Inhibits trypsin strongly and chymotrypsin temporarily. In Solanum tuberosum (Potato), this protein is Proteinase inhibitor IIA.